Reading from the N-terminus, the 286-residue chain is 3-methyl-2-oxobutanoate hydroxymethyltransferase (286 aa).

Residues Asp-51 and Asp-90 each coordinate Mg(2+). 3-methyl-2-oxobutanoate is bound by residues 51–52 (DS), Asp-90, and Lys-120. Glu-122 contributes to the Mg(2+) binding site. Residue Glu-189 is the Proton acceptor of the active site. Residues 263–286 (TFPGPSHVFSGSKASSDLNGGDES) form a disordered region.

It belongs to the PanB family. Homodecamer; pentamer of dimers. It depends on Mg(2+) as a cofactor.

The protein resides in the cytoplasm. It carries out the reaction 3-methyl-2-oxobutanoate + (6R)-5,10-methylene-5,6,7,8-tetrahydrofolate + H2O = 2-dehydropantoate + (6S)-5,6,7,8-tetrahydrofolate. Its pathway is cofactor biosynthesis; (R)-pantothenate biosynthesis; (R)-pantoate from 3-methyl-2-oxobutanoate: step 1/2. Functionally, catalyzes the reversible reaction in which hydroxymethyl group from 5,10-methylenetetrahydrofolate is transferred onto alpha-ketoisovalerate to form ketopantoate. The polypeptide is 3-methyl-2-oxobutanoate hydroxymethyltransferase (Mesorhizobium japonicum (strain LMG 29417 / CECT 9101 / MAFF 303099) (Mesorhizobium loti (strain MAFF 303099))).